A 167-amino-acid polypeptide reads, in one-letter code: Ureidoglycolate lyase (167 aa).

This sequence belongs to the ureidoglycolate lyase family. Homodimer. Ni(2+) is required as a cofactor.

The enzyme catalyses (S)-ureidoglycolate = urea + glyoxylate. It participates in nitrogen metabolism; (S)-allantoin degradation. Functionally, catalyzes the catabolism of the allantoin degradation intermediate (S)-ureidoglycolate, generating urea and glyoxylate. Involved in the utilization of allantoin as nitrogen source. This Pseudomonas entomophila (strain L48) protein is Ureidoglycolate lyase.